We begin with the raw amino-acid sequence, 327 residues long: Undecaprenyl-phosphate 4-deoxy-4-formamido-L-arabinose transferase (327 aa).

Topologically, residues 1 to 235 (MFDAAPIKKV…TCLTTTPLRL (235 aa)) are cytoplasmic. The chain crosses the membrane as a helical span at residues 236 to 256 (LSLLGSVIAIGGFSLSVLLIV). The Periplasmic segment spans residues 257-269 (LRLALGPQWAAEG). Residues 270-290 (VFMLFAVLFTFIGAQFIGMGL) form a helical membrane-spanning segment. At 291 to 327 (LGEYIGRIYNDVRARPRYFVQQVIYPESTPFTEESHQ) the chain is on the cytoplasmic side.

Belongs to the glycosyltransferase 2 family.

The protein localises to the cell inner membrane. The enzyme catalyses UDP-4-deoxy-4-formamido-beta-L-arabinose + di-trans,octa-cis-undecaprenyl phosphate = 4-deoxy-4-formamido-alpha-L-arabinopyranosyl di-trans,octa-cis-undecaprenyl phosphate + UDP. The protein operates within glycolipid biosynthesis; 4-amino-4-deoxy-alpha-L-arabinose undecaprenyl phosphate biosynthesis; 4-amino-4-deoxy-alpha-L-arabinose undecaprenyl phosphate from UDP-4-deoxy-4-formamido-beta-L-arabinose and undecaprenyl phosphate: step 1/2. Its pathway is bacterial outer membrane biogenesis; lipopolysaccharide biosynthesis. Catalyzes the transfer of 4-deoxy-4-formamido-L-arabinose from UDP to undecaprenyl phosphate. The modified arabinose is attached to lipid A and is required for resistance to polymyxin and cationic antimicrobial peptides. This chain is Undecaprenyl-phosphate 4-deoxy-4-formamido-L-arabinose transferase, found in Salmonella agona (strain SL483).